Here is a 250-residue protein sequence, read N- to C-terminus: Putative B3 domain-containing protein At4g03170 (250 aa).

The span at 1–12 shows a compositional bias: polar residues; sequence MANSTGKPTSST. Positions 1–90 are disordered; sequence MANSTGKPTS…EKNQPKRFKK (90 aa). Residues 34 to 56 are compositionally biased toward acidic residues; sequence DREEDIDDEDDIDDEVIDDEDYE. A compositionally biased stretch (basic and acidic residues) spans 72 to 84; it reads QSREREEETEKNQ. Positions 137-245 form a DNA-binding region, TF-B3; sequence KKQLMSSDVD…KLCFAIHYVK (109 aa).

Its subcellular location is the nucleus. The protein is Putative B3 domain-containing protein At4g03170 of Arabidopsis thaliana (Mouse-ear cress).